The following is a 9702-amino-acid chain: MSAESWKLQPRIEGLRGQDPVLASLIALEAWVLQAVEQFQFSTGVLKIGDAGDAPGGQWQLDGGDPRVLIAQLRGGQARQTVEDHHENSRDCAAHLRLSLLDSSEMLLILRLRFQGRAPASKSWCQEGQEGQEERCAGQVVEMECFFGAKDGGLELHRIPSPPAGAVEAVETFVRQLQERIIHQSSTTTNNNNNNALADIPRETTTTTTTTTTTTTIAASQSDLQQIWAWNATISPVAQRCVHHIIAEQAQLRPHAPAVAAWDGELNYQQLDQLSTRLALYLVQLGAGPQHMIPLCFEKSKWMIVAILAVMKSGAVIVALDPAQPEDRLQTIVNQLQQPRWIIASPAQTKVTTALGINNVIFLNHSLLQKLPDFPNRDLPSVDPSSNLYVVFTSGSTGTPKGVMINHTNFSSAIAYQHDALAMDHSSRVLDFASYAFDLAWGNIIHTLAAGGCLCIPCEDERRGNITEAICRLRVNHLQLTPSVARLIDPRDIPGLRTILLIGEPMSQADVAQWTPYAKMINSYGPAECTVAVTFQTIPHDKPWDSSMGKGVACNTWIVDETNGDTLVPLGHTGELWLEGPLVGQGYLGDPKKTAASFVDDPAWLTRGIPGVAGRPGRLYRTGDLVRYNQDGSLVYVARKDTQVKIRGQRVELGDVEYYLKLALPDKVLSVAAEAVIPWGSSTTLLVAYLALGDAATGAVESTRTSLATCLDGVEEYLAKQLPHYMVPSMYLAIPQIPMTTTGKTDRLRLREIGSSLTLDQLAAMQPSRATEKRAPQTEMEYRLQQLWAATLGIGPSSIGTEDSFLRIGGESMAAIRLVQLARKEGIVLTVADIFNQPRLCEMARAAQEKQTSVVPIVPPFSLLRGGAGEPDTRALAAAAACGVAAQSIADILPCTPLQEGLLALTAKQDGDYVHQLVSKLPATVDLVRLQAALTEVIQEAPILRTRIVDLPNAGLMQVVLTERFEWTTGSELDRFLESEKARPMGLGTPLSRFGLVSDHREGNLHFVWTIHHALYDGWSLPLLLERIEAVYAGDCSDSLPSFAGFVRYLADCPVADAHAYWQSQLNGAQAAVFPALPSPEYQPQCRDLLQCSIANVTWPGNDITASTAVRTAWAILTARYTLSADVLFGATVSGRQAPVPYIERMAGPTIATVPIRVNVQADSTVASLMQSIQSQAVAMIPYEQTGLKQIRQINSDTEQATQLQSLLVVQPPSSRSSRPPDECLLRVDLDAVDEFNTINTYALMLECRLGSNEMGLRIRYDRELIGTEQVERIAKQFEAVLRHVCSQETAQELVCTVTAASEDDLAQIWAWNATVPQNIPGCVHDLIAQRTQQQPDAPAICAWDGQLSYRELDVLSTRLAFSLVQRGAGRNTVIPLCFEKTVWTPVAMLAAIKAGSTVVAMDPGQPEDRLESIVKQTQPPLILASETYMPLASRLTEVAICVNTTALQVLAETCLEPPKLPIVHPTDGLYIAFTSGSTGNPKGATMTHQNTRSAIYHGLQALGFTSTTRVLGFSSYAFDAVWLEFLYAMASGGCLCIPSDLQRNSGDLAGCIAQLQVNHALLTPSTARLLDAAAVPTLRTLVLIGEAVTGEDLARWAGKVDLKNGYGPAECSALTTIYTFEGPNDQPSIIGPTVGLVPWVVEPSDGACLSPLGAVGELWVEGPLVGKGYLGDPDKTAASFVYDPSWLLHGAPGYPGRQARLYKTGDLVRYTSDGRLIYVGRKDTQVKIRGQRVELAEIEHYIKQATRASVVVDMASPQGSRGPVLVAYVALGQPAATLSPPETARAALQSCIQGVEDHLNKHLPRYMLPSFYIPVVEIPLTATGKTDRRRLRDTASAFALDQLAALQPSGESKRVLPQSPMEKSLQQLWAEVLNVDPSRIGMDESFFLLGGDSIAAMQVSAKSRVRGFPLTVQDIFKLKTIARLARREIQTDARLVDDQELLDTPFALSPIQQFFFDVERDRRGHFNQSFLVRITQSQQSELVLRAVQFIVGRHSMLRARFHQRPDDGVWMQQITPRADGSYVYRHHRLPSLEDAIPALNSSQQSLDVETGPIFAVDSVETAPGQQYLFLTAHHLVVDLVSWRIILEELEEYLKTDTVPSASSAPLSFQTWCRLQERYARDHLTPEVAFPFDLQPPPEAYWGLSPELNTHGDIHEAGFTLTKEATNLLLGPANRALQTQPVDLFLAALLYSFMNTFTDRDPPTVFTEGHGREPWSPEIDLSRTVGWFTTLVPIPVAAGSHTLGPSEFVRYIKDRRRQIPHNGWSYFTSRYLNAVGMASFGRHALPEIAFNYFGLYQQLERKEALFRASGCDLQDRVLDVAPHMTRFALIDVSAEVTQGCLQFRFLTSQHTQKQAALARWIAACERALEGTAVQLVNTPPSYTLSDFPLLPPTNTTSRLVETLSDHGLAYGELEDIYPCSPLQQGILLSQVKSQDMYWTQVRWRVRCNGGASPVDAARLERAWRQVVERHAVLRTRFIDSSYQMVLKEAAPSILTIQSADPVDAVVRHRATSGLSQPRPVHSLVLCPMANGDLVCSLEINHAIIDARSIQVLKHELCAAYGGALPAEPGPLYSDYIRHLQSLPTTDAMDFWRTQLANAQPCIFPTLNEPVVQARNAAAVASVPISPEIDQALRQFCRAHALTPANVFSLSWALILRCYTSSESICYGYVISGRDVPIPHVDRAVGPFINMVVSHVDVDNTRSLLGIMQEIQASYLSGVKYHHYPLAEILHDLNYNEGQPFFNTVLSVQSGSAAVDQPSPTATTIALENETWYDPNEYDIAASVLLRDNGKPEVSLNYAQNLLSERQAHAVATAFLDVVANIVRHPADRILGDLDTAILSPQDLATIWERNAEVPAALPSSVPALIACQVERQPDALAVCAWDGDFTYRQLDESSSRLAHHLLACGVRPHSILPLCFEKSRWVPVAMLGVLKAGCAAVTMDPEQPEERLRLVVQKTQAVILTSPACQDLARQLRPEVIILDGRSLQAMPPLLPDGLSLPTINPTDSLYLVFSSGTTGTPKGSVMSHQNACSAIYHQQACIGLPPSEARILDALSYAFDAPWFTFLHGLTSGGCLCIPSDTQRKEDLAGCIRGLGANYAILTPSVARLVDPPTVPSLEALGLGGEAIQTEDVTRWTSHVTLFGYYGPSECTICATIHRFKDRTDEPRMLGHSVGMRAWVVDPVHGRSLTPLGGTGELCLEGPLVGQGYLDEPEKTAASFVEDPGWLLRGAGPGYPGRRGRVYHTGDLVRCRTDGSMLYVGRKDTQVKIRGQRVELGEVEYHFRQTLPAGVDGPGTVVVEFVLFQGSTSPVLVAFIPLGHEATASAQSTRAALARCTDGAEERLIKRLPTYMIPRMYVPVAEIPLTTSGKTDRRSLQHVASSHTLEQIAALQPSRHMRRAPTTEMERHLQGLWATILDIDPATIAATDNFLRMGGDSIAAIRLVQLAGEQDILLTVAAVFKSPTLCEMSQVAKLGSVSSQNDPIPPFSLLNAEMDASQARVQVAALCELSPSSVEDVFPCTPLQEGLLSLTVKHQGDYVNRQVFALHSEVDPARFRNAWNKVSLSTSILRTRIVDLPGQGLVQVITSELPEWHHGRSLDDLVDEDRQRHIALGTPLARFGLVANADVNGDQQQYFLLTLHHALYDGWSLPLLLEEVAKAYYETPAANLVSFKSFVNHVTELGAEADSYWQSTLDGLTAVPFPSLPSPLYQPRAQDILEHDISGLQWLQNHITPATAIRAAWALLTAHYTQSTDVVLGSTVTGRQAPIHRIELVEGPTITTVPVRIPIDGKMSLAGLLDQVQEQSIDMIPYEQVGLQRIRRLSADSEQACQFQTLLVVQPAPEPTSSLGYARLFHEEEDPTASQTALNNFNSYALLLQCQLMPTGVAIQMSYDSHVMPQPQMHHLARQFENILRLLCDASHHQSPVSQLDVICEDDLRTIWASNSPVPARIEACMHDVITKQTQRRSAAQAVAAWDGSLTYSELDELSTQLAYDLVNLGIAPQTVIALCFEKSMWMPVAMLGVMKAGCASVTLDITQPEDRLRTIIQQVQPPVVLSSREAKILAQRLTDGPVHVVSQDSLQASSTPGKVERDQLPVVQPTDQLYICFTSGSTGVPKGAVMSHQNMTSAVHHQQAGLGFTESCRVFDFSSYAFDACWLNFLHTMAAGACLCIPSEEERKSDIVGCMRRMAVTYANLTPSTARLIDPTSIPDLQTLVLIGEPVAQQDIDQWKAHVQLKNGYGPAECSAISTTFDYGQSDCDPRTIGAGCGMITWVVEPTESRHLSPYGAVGELWVEGPLVGIGYLGRSDLSAASFMDSPPWLLRGGSHEFPGRSGRVYRTGDLVHYNLDGSGTLVCVGRKDAQVKIRGQRVELGEVEHFLNQALPLAAAEGVSIAVDVINLQGSANPLLVAYLAIGELALGPAETVRAKLAYYSQGARERLADQLPGYMVPSLFLPVVEIPMTTTGKRDRRRLRETWASSSLEELVELQPTRTNHQPPTTDLERQIQQLWAECLNVTPSKIGIHDSFFALGGDSISAMQLSAKGRSVNLPMTVSDIFKHKSIARLALSVSAAVDVTVAHAPEDHGVSFALSPIQQMFADTQQGVSNHFNQSFFVQVCQPVIFPQVQAAVDVLVAHHGMLRASLRCSGDNIWSQQILPPGTTGTYRVSQHDVPDFQAASAVINQSQLSLDIQSGPVMAVDLINTNKGQYLFLVAHHMVVDLVSWRIILADLEEHLTTASLSGFTSMSFQTWCQLQVDHAQSHVELEAVLPAGASPPPPPQLDYWGPVRNSNTFDNIVKGGIVLSKPVTEALLGPANIAFDTQLVELLHASLLHSFAKVFHDRTPPTIYSEGHGREPWSSTIDISRTVGWFTTMFPVVATAEKGDSIASIVRHVKDCRRQIPGNGRPYFATRFLTPAGKRAFQHHGPVEVIFNYLGLYQQLEREDSLFRQRGVPNGVDEMADISGRLFRFALVDISASVTDGALHVDFLYNRHMQHQDSIRAWIEECQRSLQAAAQALPLLQPSYTLCSFPLLRLADSALPILQHRLAELGLAYGQVEDIYPCSPLQNGILLSQMRDPDLYRTRVRWMAQPAHGSQSLDILKLKQAWQQLVDRHPILRTLFVEGISGRGLKDQLVVKNLQANVHIVQSSADNARSQSPSAPTARKSDSLLTLSMTETGVLCELSINHALIDAFSLGILKEELCAAYEGCLSSLAPLYSDYIQYTQSVSMESAEAYWQDHLRGVQPCLFPPLSNPNAESRRSHTSISVPFEQDLHLALRTFCIEHEVTTSNVFHVAWGLVLRAYTGLETVCFGYLKSGRDIPLQGADRTVGPFINMLTSRVDLANRGDSLLTLIQRNQEQYLASLEFQHIPLAKIFHLTDTPEKELFNTAISVQAVRTGPENTQSAMSLLDVGGDDPTEYDILINFGVGDDQTGFIFNFNDSVISPSHAKSALDLFLHAVSHTVQHKDQSAQDANIISHQDLETIWRWNAAVPKPHHQCVHELIMQQAESQPGAAAIHAWDGDLTYQELNDLSTQLACHIRYLGVEAGVHVPLLFEKSQWMSVASLAVMKAGGTMVGLDPSQPEERLQNIIQQVQPRLILASANAHATIAAVLAGACPVVRVDAASLAELNNTVSHFPLPRVDPATSLYLVFTSGSTGLPKGVAISHSNLSTAIAHQRSILRLSSSSRVLEFASYAFDVAWGTILHTLAAGGCVCVPEESERRGDLSAAIRRLEVNYMHLTPTVARLLSPTHLPRLQTLVLSGETVSQADVEQWISHVHLINAYGPAEATVWDTFADLTPGISIPSIGRGVGCSTWVVNPRRPDQLAPVGCTGELWLEGPLVGTGYHHDPERTAAAFVENPRWLVEGAGGSRYPGRQGRLYRTGDLVRYTSDGSIVYVGRKDNQVKIHGQRVELEEIEKHIQQALLDSSVSAAPAVPVVAAVIIPKKSTRPILVAYLALGEEATSSLGVLRRRLGTYAAVINQGLEKHLPTYMRPSIYIPVADIPMTTNGKADRRKLDAIGCGRTLAEWAGLQTDEDSQCTTASSPEELELQRLFSEVLNLDCGLVGMNDSFFSLGGDSITAMQLSAKSQSGRVYITVGDIFRHKTVAQLVSHAQGNTATKTSFEELVEVPDSLFELSPIQQLFFASQDTGKSLFNQSFLVSVSRPLNSNELDHAIGVLTARHSMLRARFVHGADGRWQQKIAADTAGCYVFRSHQITDFQDMEPVLHNSQLSLDIVRGPILAVDLVDSTQDGQQYLFMAAHHLIVDLVSWRIILGDLEEYLLSGTIAGFPPFSFQSWSQLQAQYARDHLPPQIALPFEVSPPRHDYWGLAPGDVANTLGDASRSSFTIDEHLTNVLLGPTANSAFDTQPVEILHAALLYAFAQTFKDRDAPSFFSEGHGREAWDSAIDLSRTVGWFTTIFPVAASVTQKNSLAEVVRCIKDTRRQTPANGWSYFTSRYLNPAGQRVFQLKGPVEIIFNYMGLYQQLERPDALFQQSDIAVTEPPAAAETLSRFALIDVAGSIVHGQLKLEFVYNKKMSGQDKIVEWIGRCKSSLEAAAAELPRLSPSYTICDFPLLSLSSTSLDRLTAEVLPALDIAYGQVEDIYPCAPIQQGILLSQAKNPELYWTRVRWTVQSTSTLPVDLSRLKHAWQLVVSRHAILRTIFIDGIGSGTVKNQVVLKDLRVDVGVLHPEQDSGHERRTILLSQTQLPQHALALAQTPSGGVLCDLEINHGMMDAYSLGLLRQEICAAYSGTLPTSPAPSYRSYIQHLQGVSVDEGHRFWKTYLDNIQPCHFPALGVVHGDDGPKTRSARSILLDTATHRTLRAFCRQHGVTSSNLFYLAWGLLLRTYTRSDRVCFGYLTSGRDVPVPGVDKIIGPLINMLVCALDFGEKASVRSVMRKVQEDYLSALSHQSTPLSKMLQLAGTSGQGLFNTGISVQGGAASSDLDQQDITITDQTGEDSPEYDIAVAISHDEDETEISFDYTDAALSSEAAESLGEFLVDIVADLVRDPDQSVQAITMISQQDLRSLWTWNRSVAETEHACVHDLIGTNVQKRPDAPAIDAWDGSLTYRALDSLSSRLACYLAHRGIQPNAAIPLCFEKSMWMPVAALAVIKAGGACVAMDMTQPEQRLRTILHQVQPDLLLASSENAQVARQLGDSQPVLEISQSFFTGLSRPISLCLPPVMPSGHLYTVFTSGSTGIPKGVIISHANFASAIVHQTGLLSLGPDSRVFDFVSYAFDVSWSNLLHTLAAGACLCIPSEAMRRDNPVEAMAAMQVTHAQLTPSMARTVDPDRCETLRTLILGGEAMSPHDIATWASRVDLRVAYGPAECTVAGVTATVPPQSAAHWELGKIGHGLGMNTWIVSMLDPTSLAPVGTVGELYLEGPLVGQGYLDQPDKTATGFVDDPAWLVRGGPSGSFPGRRGRLYRTGDLVRYCPDGSLLFVGRRDNQVKVRGQRVELQEVESHLQAHLVEAIGVVADVFKPQGSSNAMLVAYLAVGETIHSPTDRIHTALRPLIQGLNESLSAQIPQYMIPSMYIPVASIPIAATGKADRKCLRQLGSSLTLEQLARIQPPQDGEQQQGPQTEVERLLQGIWADVLNIRGQECIGVRESFFALGGDSISAMQLSTKMRSAGFSITVPDIFKLKTIANLARSARTVQGHVKTTTTWETRDDEPFDLAPVQQMFADVVRRKCNHFNQSYFLRIARPSIRAADVQRALEWVVRQHPMLRARFTLDPSGRWTQHIKPYTPGCYRYLEHVVESSFAEASPVLNASQTSLDLETGPLFSADLIQIRSTGDHYLYLVAHHMVVDLVSWRVIIAEIEDHLTAPNASSSSSLAPPMPFQAWCRLQAEHARDHLAPETALPVEIPPPPPGYWGAGDPESNTFGNAIHRSFKLTREVTDLLLGPANKAFDTQPVEILQGALLYSFVQVFQDRAPPTIFSEGHGREPWNTAIDLSRTVGWFTTLLPTVTSMGSDNTLAELVRHTKDCRRQVPGNGWPYFASRYLNPAGKQAFGTYGLPEITFNYLGANLGLDQGPGKDDSLLQPAALPPGCLSDVDESMPRFAWIEVSASVSSGCLEFGFLFGRCMKHRKSIEDWVAQCQRSLVTASELLMQRPPSYTRSDFPLLRLTEPALQTLVGSSLPQLGVSYGQVEDIYPCSPIQQGILLSQAKDPRVYWTRIRWRARSSDATMPLDPDRLARAWTRVVERHPVLRTRFINGLSPDSLKDQLVLKVSKPEIHVISGQEATDDPIAALDCYWERAQRKDHQLHALVMCPADASSGDVFCDLEMNHAITDATSTALLKRDIQAAYNGTLPETQPGPSYSDFIRHIHAIPAEVGMEYWRRYLEGAYACIFPTLAPAAATNSQDATVQNHPRGSLSHTLEQETHASLQAFLKTHELTAFNVFHLAWALILRCFVGSETLCFGYLLSGRDVPVDHADQIIGPFINMLVSRVGLGEGVTLMDAMKQSQADYLDSLTHQHCSLAQIINSLGNGGAEPLYNSVISVQGMDLKKENAGIDRGLCLEEQGGHDPTEYGIMINVGLGEQETAITFSYHVSLLSEEQASGVVDSLLRAVREIIRTPFRKAHEVDLSTDHDQQAIWAWNACVPPTVDLPVHGLVANTVQKQPHSTAICAWDGELSYGQLDELSTTLAHHLLARGLSSDTVVPLCFEKSLWMPVAILAVMKAGGVSVSMDANQPEERLRTIIEQTQPVIILCSETTHEKACRLGTCQVIPVGQRLLAGLAVPGQDATTRTTTTTTTTTTTLPIVDPSHRLYITFTSGSTGTPKGAIVTHSNFSSALLQQQEALSFGPHVRVFDFVSYAWDVAWSNLLRTLVAGGCLCIPSEFQRREEIEKTMSQLRVNYTTLTPSVARLLNPAAVPHLDTLALIGEPLSQADIARWAPHTKEIINTYGPSECPGCVTVSQIPLDTLYEPTLGVGSACNTWIVDPNNADHLVPVGGIGELWLEGPLIGLGYLGLPQRTAESFVTDPRWLLSGCPGRPGRGGRLYRTGDLVRYAPDGALIYIGRKDSQVKIRGQRVELGEIEYHVREGIAHISPVTDDLTVVAGVITPRGGSSKTLVVYLELGPIATGPVDRIRDALAGYTRGLDDYLSDRLPQYMLPNAYIPVAEIPMTVSGKTDRGRLSRIGASYTLSELAAMQPSSHEQRQSPTAPMERRLQQLWATVLGLDDPNAIAADASFFRIGGDSIAAIRLSQRASEDGLALTAADIFRKPRLCDLALLVREGDATSYHEPRPFSLLSAGGSGGAESNRLPDDLAARIGPLLEWPQHHIADVYPTTDLQNHYVSAAVDAHRGEVEYIYMDLPRGVDLARVQRSCLELWRHLDILRTVFIVDPQTRQTLQVVLNNVEPEIEVRHTEGDLRAACEQAYGEDLHRPLYLGRSFTRFLITANRASGDARLTLRLSHAQYDGFSLPIIFSLFAAFHRDDTPPPAAPKFAGYLRHVQKQRPAAEPYWRRLLEGSCITQTRHLSGLDGACRPNQHHGQLVQSKSTVPAPPARPGSTPATVFTTLCARTLAQLTGVRDVVFGNIVSGRATLPTALQTVAGPCVNTIPVRLRVEPEQSLTQQLATVHAQHIHSLPFETSQFSEIAAHCTDWPGDARAPGLVVQFQNLDNLEHDPGTAMHDTTEGGGTLAAYERPAAERLVDSDFLFILAKPVRDAWELSVAASDKLHTQATLDAVLEALCWQVEMVARGD.

Residues 248 to 647 (EQAQLRPHAP…ARKDTQVKIR (400 aa)) are adenylation 1. A Carrier 1 domain is found at 775–852 (APQTEMEYRL…MARAAQEKQT (78 aa)). Position 812 is an O-(pantetheine 4'-phosphoryl)serine (Ser812). The interval 891–1288 (DILPCTPLQE…EAVLRHVCSQ (398 aa)) is condensation 1. Positions 1330–1730 (QRTQQQPDAP…GRKDTQVKIR (401 aa)) are adenylation 2. Residues 1857–1933 (LPQSPMEKSL…RLARREIQTD (77 aa)) form the Carrier 2 domain. An O-(pantetheine 4'-phosphoryl)serine modification is found at Ser1894. The tract at residues 1946–2374 (PFALSPIQQF…ERALEGTAVQ (429 aa)) is epimerization 1. The tract at residues 2414-2842 (EDIYPCSPLQ…LDTAILSPQD (429 aa)) is condensation 2. The segment at 2868-3267 (QVERQPDALA…GRKDTQVKIR (400 aa)) is adenylation 3. A Carrier 3 domain is found at 3397 to 3473 (APTTEMERHL…EMSQVAKLGS (77 aa)). Ser3434 carries the post-translational modification O-(pantetheine 4'-phosphoryl)serine. The segment at 3512-3920 (EDVFPCTPLQ…LLCDASHHQS (409 aa)) is condensation 3. The interval 3957-4361 (KQTQRRSAAQ…GRKDAQVKIR (405 aa)) is adenylation 4. Residues 4491–4568 (PPTTDLERQI…LALSVSAAVD (78 aa)) enclose the Carrier 4 domain. Ser4528 carries the post-translational modification O-(pantetheine 4'-phosphoryl)serine. The epimerization 2 stretch occupies residues 4583 to 5013 (ALSPIQQMFA…QAAAQALPLL (431 aa)). Residues 5049 to 5474 (VEDIYPCSPL…ANIISHQDLE (426 aa)) form a condensation 4 region. The tract at residues 5496 to 5899 (MQQAESQPGA…GRKDNQVKIH (404 aa)) is adenylation 5. Residues 6033 to 6110 (TASSPEELEL…LVSHAQGNTA (78 aa)) enclose the Carrier 5 domain. Ser6070 is modified (O-(pantetheine 4'-phosphoryl)serine). Residues 6127 to 6551 (ELSPIQQLFF…CKSSLEAAAA (425 aa)) form an epimerization 3 region. The condensation 5 stretch occupies residues 6593–6935 (VEDIYPCAPI…TGISVQGGAA (343 aa)). Positions 7047-7447 (KRPDAPAIDA…GRRDNQVKVR (401 aa)) are adenylation 6. In terms of domain architecture, Carrier 6 spans 7575 to 7655 (GPQTEVERLL…RSARTVQGHV (81 aa)). Ser7613 carries the post-translational modification O-(pantetheine 4'-phosphoryl)serine. Positions 7670–8106 (DLAPVQQMFA…LVTASELLMQ (437 aa)) are epimerization 4. Residues 8144–8588 (VEDIYPCSPI…EVDLSTDHDQ (445 aa)) are condensation 6. Residues 8612-9025 (NTVQKQPHST…GRKDSQVKIR (414 aa)) form an adenylation 7 region. Residues 9158–9236 (SPTAPMERRL…LALLVREGDA (79 aa)) form the Carrier 7 domain. The residue at position 9196 (Ser9196) is an O-(pantetheine 4'-phosphoryl)serine. A condensation 7 region spans residues 9282 to 9629 (DVYPTTDLQN…DNLEHDPGTA (348 aa)).

The protein belongs to the NRP synthetase family.

Its pathway is secondary metabolite biosynthesis. In terms of biological role, nonribosomal peptide synthetase; part of the gene cluster that mediates the biosynthesis of the unguisins, gamma-aminobutyric acid (GABA)-containing fungal cyclic heptapeptides with the amino acid sequence cyclo-(D-Ala1-D-Val2-L-Phe3-D-Val4-D-Ala5-D-Trp6-GABA7) for unguisin A and cyclo-(D-Ala1-D-Val2-L-Leu3-D-Val4-D-Ala5-D-Trp6-GABA7) for unguisin B. UngA is the main enzyme within the cluster which condenses the 7 residues using its respective 7 modules. The terminal condensation domain (Ct) is involved in cyclization with D-alanine and thereby releasing of unguisins A and B. The alanine racemase ungC provides D-alanine, which is then accepted by the first adenylation domain of ungA. Finally, the hydrolase ungD catalyzes the hydrolysis between the D-tryptophan and GABA residues of unguisins A and B to produce the corresponding linear peptides. The chain is Nonribosomal peptide synthetase ungA from Aspergillus violaceofuscus (strain CBS 115571).